Reading from the N-terminus, the 316-residue chain is Metal cation efflux system protein CzcD (316 aa).

The Cytoplasmic portion of the chain corresponds to 1-16; it reads MGAGHSHDHPGGNERS. The helical transmembrane segment at 17-37 threads the bilayer; that stretch reads LKIALALTGTFLIAEVVGGVM. Residues 38-46 lie on the Periplasmic side of the membrane; that stretch reads TKSLALISD. Residues 47 to 67 form a helical membrane-spanning segment; it reads AAHMLTDTVALAIALAAIAIA. Residues 68–81 are Cytoplasmic-facing; sequence KRPADKKRTFGYYR. The chain crosses the membrane as a helical span at residues 82–102; sequence FEILAAAFNALLLFGVAIYIL. At 103-114 the chain is on the periplasmic side; it reads YEAYLRLKSPPQ. A helical transmembrane segment spans residues 115-135; it reads IESTGMFVVAVLGLIINLISM. The Cytoplasmic portion of the chain corresponds to 136-151; that stretch reads RMLSSGQSSSLNVKGA. 2 helical membrane passes run 152–172 and 174–194; these read YLEV…AIII and FTGW…WVLP. Over 195-316 the chain is Cytoplasmic; it reads RTWILLKSSL…GSKSLAAGGN (122 aa).

Belongs to the cation diffusion facilitator (CDF) transporter (TC 2.A.4) family. SLC30A subfamily.

The protein localises to the cell inner membrane. With respect to regulation, efflux is inhibited by FCCP. Mediates a low-level metal ion resistance, probably by efflux of cations from the cytoplasm into the periplasm. Also mediates resistance to cobalt, cadmium and zinc via regulation of the Czc system. May repress expression of the Czc system by an export of the inducing cations. Binds and transports zinc. Can also bind cobalt, copper and nickel. The sequence is that of Metal cation efflux system protein CzcD (czcD) from Cupriavidus metallidurans (strain ATCC 43123 / DSM 2839 / NBRC 102507 / CH34) (Ralstonia metallidurans).